The sequence spans 118 residues: Basic phospholipase A2 homolog 1 (118 aa).

7 disulfide bridges follow: C11-C71, C27-C117, C29-C45, C44-C98, C51-C91, C60-C84, and C78-C89. An important for membrane-damaging activities in eukaryotes and bacteria; heparin-binding region spans residues 106–118; sequence NKNFNIDTKKRCK.

It belongs to the phospholipase A2 family. Group I subfamily. D49 sub-subfamily. In terms of tissue distribution, expressed by the venom gland.

The protein resides in the secreted. The polypeptide is Basic phospholipase A2 homolog 1 (Laticauda colubrina (Yellow-lipped sea krait)).